Here is a 226-residue protein sequence, read N- to C-terminus: Leucyl/phenylalanyl-tRNA--protein transferase (226 aa).

It belongs to the L/F-transferase family.

It is found in the cytoplasm. It carries out the reaction N-terminal L-lysyl-[protein] + L-leucyl-tRNA(Leu) = N-terminal L-leucyl-L-lysyl-[protein] + tRNA(Leu) + H(+). It catalyses the reaction N-terminal L-arginyl-[protein] + L-leucyl-tRNA(Leu) = N-terminal L-leucyl-L-arginyl-[protein] + tRNA(Leu) + H(+). The enzyme catalyses L-phenylalanyl-tRNA(Phe) + an N-terminal L-alpha-aminoacyl-[protein] = an N-terminal L-phenylalanyl-L-alpha-aminoacyl-[protein] + tRNA(Phe). Its function is as follows. Functions in the N-end rule pathway of protein degradation where it conjugates Leu, Phe and, less efficiently, Met from aminoacyl-tRNAs to the N-termini of proteins containing an N-terminal arginine or lysine. This is Leucyl/phenylalanyl-tRNA--protein transferase from Bradyrhizobium diazoefficiens (strain JCM 10833 / BCRC 13528 / IAM 13628 / NBRC 14792 / USDA 110).